The chain runs to 150 residues: Auxin-binding protein 5 (150 aa).

The first 41 residues, M1 to S41, serve as a signal peptide directing secretion. Zn(2+) is bound by residues H98, H100, and E104. N136 carries N-linked (GlcNAc...) asparagine glycosylation. H147 is a Zn(2+) binding site.

Homodimer.

It localises to the endoplasmic reticulum lumen. Its function is as follows. This is probably a receptor for the plant hormone auxin. The protein is Auxin-binding protein 5 (ABP5) of Zea mays (Maize).